The sequence spans 565 residues: Adenine deaminase 1 (565 aa).

This sequence belongs to the metallo-dependent hydrolases superfamily. Adenine deaminase family. It depends on Mn(2+) as a cofactor.

It carries out the reaction adenine + H2O + H(+) = hypoxanthine + NH4(+). The chain is Adenine deaminase 1 from Rhizobium meliloti (strain 1021) (Ensifer meliloti).